We begin with the raw amino-acid sequence, 196 residues long: RNA pyrophosphohydrolase (196 aa).

The region spanning 6 to 149 is the Nudix hydrolase domain; the sequence is GYRPNVGIVI…KRDVYRKVMK (144 aa). Positions 38-59 match the Nudix box motif; sequence GGINDNESAEQAMYRELHEEVG.

The protein belongs to the Nudix hydrolase family. RppH subfamily. The cofactor is a divalent metal cation.

In terms of biological role, accelerates the degradation of transcripts by removing pyrophosphate from the 5'-end of triphosphorylated RNA, leading to a more labile monophosphorylated state that can stimulate subsequent ribonuclease cleavage. The sequence is that of RNA pyrophosphohydrolase from Haemophilus influenzae (strain ATCC 51907 / DSM 11121 / KW20 / Rd).